The following is an 855-amino-acid chain: Receptor-like protein kinase THESEUS 1 (855 aa).

A signal peptide spans 1 to 22 (MVFTKSLLVLLWFLSCYTTTTS). Topologically, residues 23–415 (SALFNPPDNY…GGSGSKSKKK (393 aa)) are extracellular. 14 N-linked (GlcNAc...) asparagine glycosylation sites follow: asparagine 41, asparagine 64, asparagine 75, asparagine 114, asparagine 118, asparagine 136, asparagine 143, asparagine 154, asparagine 168, asparagine 225, asparagine 242, asparagine 288, asparagine 353, and asparagine 376. Residues 416-436 (AVIIGSLVGAVTLILLIAVCC) form a helical membrane-spanning segment. Over 437-855 (YCCLVASRKQ…FSQLVHPRGR (419 aa)) the chain is Cytoplasmic. The Protein kinase domain occupies 510–783 (FDESSLLGVG…GDVLWNLEYA (274 aa)). ATP contacts are provided by residues 516–524 (LGVGGFGRV) and lysine 538. The active-site Proton acceptor is aspartate 634. The tract at residues 822–855 (IDRGGVNSGTGTDDDAEDATTSAVFSQLVHPRGR) is disordered.

Belongs to the protein kinase superfamily. Ser/Thr protein kinase family. In terms of processing, autophosphorylated. In terms of tissue distribution, expressed in most vegetative tissues, including leaves, stems and roots, primarily in expanding cells and vascular tissue.

The protein localises to the cell membrane. Functionally, receptor-like protein kinase required for cell elongation during vegetative growth, mostly in a brassinosteroid-(BR-) independent manner. Mediates the response of growing plant cells to the perturbation of cellulose synthesis and may act as a cell-wall-integrity sensor. Controls ectopic-lignin accumulation in cellulose-deficient mutant backgrounds. The sequence is that of Receptor-like protein kinase THESEUS 1 (THE1) from Arabidopsis thaliana (Mouse-ear cress).